Reading from the N-terminus, the 259-residue chain is Thiazole synthase (259 aa).

The active-site Schiff-base intermediate with DXP is the K95. 1-deoxy-D-xylulose 5-phosphate-binding positions include G156, 182–183 (AG), and 204–205 (AS).

Belongs to the ThiG family. In terms of assembly, homotetramer. Forms heterodimers with either ThiH or ThiS.

The protein localises to the cytoplasm. The enzyme catalyses [ThiS sulfur-carrier protein]-C-terminal-Gly-aminoethanethioate + 2-iminoacetate + 1-deoxy-D-xylulose 5-phosphate = [ThiS sulfur-carrier protein]-C-terminal Gly-Gly + 2-[(2R,5Z)-2-carboxy-4-methylthiazol-5(2H)-ylidene]ethyl phosphate + 2 H2O + H(+). Its pathway is cofactor biosynthesis; thiamine diphosphate biosynthesis. Catalyzes the rearrangement of 1-deoxy-D-xylulose 5-phosphate (DXP) to produce the thiazole phosphate moiety of thiamine. Sulfur is provided by the thiocarboxylate moiety of the carrier protein ThiS. In vitro, sulfur can be provided by H(2)S. The polypeptide is Thiazole synthase (Corynebacterium efficiens (strain DSM 44549 / YS-314 / AJ 12310 / JCM 11189 / NBRC 100395)).